The primary structure comprises 448 residues: Trk system potassium uptake protein TrkA homolog 2 (448 aa).

An RCK N-terminal 1 domain is found at 1 to 124; the sequence is MKAVVIGAGE…RAQVGVDIMI (124 aa). NAD(+) contacts are provided by residues 7-11, Glu-29, 70-71, and Arg-101; these read GAGEV and TG. The region spanning 144–225 is the RCK C-terminal 1 domain; it reads IDAEMFAGGK…MADLENVFGN (82 aa). Residues 230-348 enclose the RCK N-terminal 2 domain; the sequence is RNRILLIGCG…FEMVGIDIAV (119 aa). 232–262 provides a ligand contact to NAD(+); sequence RILLIGCGIVGFYLAKIIDKDENADLKVIEY. The 81-residue stretch at 368 to 448 folds into the RCK C-terminal 2 domain; that stretch reads EALATIEGEK…AVRSVEKLFK (81 aa).

In terms of biological role, part of a potassium transport system. The sequence is that of Trk system potassium uptake protein TrkA homolog 2 (trkA2) from Methanosarcina mazei (strain ATCC BAA-159 / DSM 3647 / Goe1 / Go1 / JCM 11833 / OCM 88) (Methanosarcina frisia).